Reading from the N-terminus, the 585-residue chain is Capsid vertex component 2 (585 aa).

Residues 1–49 (MDPYYPFDALDVWEHRRFIVADSRSFITPEFPRDFWMLPVFNIPRETAA) are interaction with major capsid protein/MCP. Residues 109–138 (EEADAARDAEARGEGAADGAAPSPTAGPAA) form a disordered region. The span at 112-123 (DAARDAEARGEG) shows a compositional bias: basic and acidic residues. The segment covering 125–138 (ADGAAPSPTAGPAA) has biased composition (low complexity).

Belongs to the herpesviridae CVC2 protein family. As to quaternary structure, heterodimerizes with CVC1. Interacts with major capsid protein/MCP and triplex capsid protein 1/TRX1 at the pentamer vertices. Interacts with the large tegument protein/LTP.

It localises to the virion. Its subcellular location is the host nucleus. In terms of biological role, capsid vertex-specific component that plays a role during viral DNA encapsidation, assuring correct genome cleavage and presumably stabilizing capsids that contain full-length viral genomes. Participates in the interaction between the capsid and the tegument through interaction with the large tegument protein/LTP. The chain is Capsid vertex component 2 from Homo sapiens (Human).